The following is a 485-amino-acid chain: Trk system potassium uptake protein TrkG (485 aa).

Over 1-5 the chain is Cytoplasmic; it reads MNTSH. Residues 6–32 traverse the membrane as a helical segment; it reads VRVVTHMCGFLVWLYSLSMLPPMVVAL. Residues 33–38 lie on the Periplasmic side of the membrane; it reads FYKEKS. The helical transmembrane segment at 39 to 60 threads the bilayer; it reads LFVFFITFVIFFCIGGGAWYTT. Residues 61 to 68 are Cytoplasmic-facing; sequence KKSGIQLR. A helical transmembrane segment spans residues 69–93; it reads TRDGFIIIVMFWILFSVISAFPLWI. The segment at residues 101 to 112 is an intramembrane region (helical; Pore-forming); sequence FIDALFEGVSGI. An intramembrane segment occupies 113-118; sequence TTTGAT. The tract at residues 113–118 is selectivity filter part 1; sequence TTTGAT. K(+)-binding residues include Thr114 and Thr115. Topologically, residues 119–127 are periplasmic; the sequence is VIDDVSSLP. A helical membrane pass occupies residues 128–153; the sequence is RAYLYYRSQLNFIGGLGVIVLAVAVL. Residues 154–180 lie on the Cytoplasmic side of the membrane; that stretch reads PLLGIGGAKLYQSEMPGPFKDDKLTPR. A helical membrane pass occupies residues 181–205; sequence LADTSRTLWITYSLLGIACIVCYRL. At 206 to 208 the chain is on the periplasmic side; the sequence is AGM. An intramembrane region is located at residue Pro209. The segment at residues 210-221 is an intramembrane region (helical; Pore-forming); the sequence is LFDAICHGISTV. An intramembrane segment occupies 222-227; it reads SLGGFS. Residues 222-227 form a selectivity filter part 2 region; that stretch reads SLGGFS. Residues Leu223 and Gly224 each contribute to the K(+) site. The Periplasmic portion of the chain corresponds to 228–237; the sequence is THSESIGYFN. Residues 238 to 253 constitute an intramembrane region (helical); sequence NYLVELVAGSFSLLSA. A helical transmembrane segment spans residues 277–297; it reads LRFFLLIALGVIIVTSFQVWH. An intramembrane region (helical; Pore-forming) is located at residues 303 to 318; that stretch reads LHGSFIHSFFLASSML. An intramembrane segment occupies 319–324; it reads TDNGLA. The selectivity filter part 3 stretch occupies residues 319–324; that stretch reads TDNGLA. Positions 320 and 321 each coordinate K(+). Residues 325–332 are Periplasmic-facing; the sequence is TQDYASWP. An intramembrane region (helical) is located at residues 333–344; sequence THTIVFLLLSSF. An intramembrane region (note=Loop between two helices) is located at residues 345–357; it reads FGGCIGSTCGGIK. The chain crosses the membrane as a helical span at residues 392 to 419; it reads TDRVMRSVWSFFFLYTLFTVFFILVLNG. At 420–421 the chain is on the periplasmic side; it reads MG. Residues 422-423 lie within the membrane without spanning it; that stretch reads YD. Positions 424–434 form an intramembrane region, helical; Pore-forming; sequence FLTSFATVAAC. An intramembrane segment occupies 435 to 441; sequence INNMGLG. The segment at 436–441 is selectivity filter part 4; it reads NNMGLG. Asn437 and Met438 together coordinate K(+). Topologically, residues 442–453 are periplasmic; the sequence is FGATASSFGVLN. An intramembrane region (helical) is located at residues 454–465; that stretch reads DIAKCLMCIAMI.

It belongs to the TrkH potassium transport family.

Its subcellular location is the cell inner membrane. Functionally, low-affinity potassium transport system. Interacts with Trk system potassium uptake protein TrkA. Requires TrkE (sapD) for maximal transport activity, low activity is seen in its absence; no further stimulation is seen with SapF. Transport in the absence of SapD is dependent on a high membrane potential and a high cytoplasmic ATP concentration, suggesting this protein may be able to interact with other ATP-binding proteins. Can transport potassium and rubidium. This is Trk system potassium uptake protein TrkG (trkG) from Escherichia coli (strain K12).